A 538-amino-acid chain; its full sequence is Chaperonin GroEL (538 aa).

ATP-binding positions include 29–32 (TIGP), 86–90 (DGTTT), G413, 476–478 (NAA), and D492.

The protein belongs to the chaperonin (HSP60) family. As to quaternary structure, forms a cylinder of 14 subunits composed of two heptameric rings stacked back-to-back. Interacts with the co-chaperonin GroES.

The protein localises to the cytoplasm. It catalyses the reaction ATP + H2O + a folded polypeptide = ADP + phosphate + an unfolded polypeptide.. In terms of biological role, together with its co-chaperonin GroES, plays an essential role in assisting protein folding. The GroEL-GroES system forms a nano-cage that allows encapsulation of the non-native substrate proteins and provides a physical environment optimized to promote and accelerate protein folding. This is Chaperonin GroEL from Staphylococcus aureus (strain USA300).